Reading from the N-terminus, the 334-residue chain is Ribosomal RNA small subunit methyltransferase H (334 aa).

Residues G39–H41, D59, F83, D100, and Q107 contribute to the S-adenosyl-L-methionine site. Positions E303–P334 are disordered.

Belongs to the methyltransferase superfamily. RsmH family.

It is found in the cytoplasm. It carries out the reaction cytidine(1402) in 16S rRNA + S-adenosyl-L-methionine = N(4)-methylcytidine(1402) in 16S rRNA + S-adenosyl-L-homocysteine + H(+). Functionally, specifically methylates the N4 position of cytidine in position 1402 (C1402) of 16S rRNA. The polypeptide is Ribosomal RNA small subunit methyltransferase H (Verminephrobacter eiseniae (strain EF01-2)).